The chain runs to 149 residues: Large ribosomal subunit protein bL9 (149 aa).

This sequence belongs to the bacterial ribosomal protein bL9 family.

Its function is as follows. Binds to the 23S rRNA. This chain is Large ribosomal subunit protein bL9, found in Aquifex aeolicus (strain VF5).